We begin with the raw amino-acid sequence, 401 residues long: Serine--glyoxylate aminotransferase (401 aa).

The residue at position 1 (methionine 1) is an N-acetylmethionine. Pyridoxal 5'-phosphate is bound by residues 68-70 (TGT), threonine 148, and 200-201 (QK). Lysine 201 is a binding site for 3-hydroxypyruvate. N6-(pyridoxal phosphate)lysine is present on lysine 201. Serine 204 is subject to Phosphoserine. Arginine 347 is a 3-hydroxypyruvate binding site. The Microbody targeting signal motif lies at 399–401 (SRI).

The protein belongs to the class-V pyridoxal-phosphate-dependent aminotransferase family. In terms of assembly, forms homodimers. Interacts with RABGAP22. Pyridoxal 5'-phosphate serves as cofactor. In terms of tissue distribution, widely expressed. Preferentially expressed in green, leafy tissues, root cortex and epidermis, developing siliques and dry seeds.

The protein resides in the peroxisome. The enzyme catalyses glyoxylate + L-serine = 3-hydroxypyruvate + glycine. It carries out the reaction glyoxylate + L-alanine = glycine + pyruvate. The catalysed reaction is L-serine + pyruvate = 3-hydroxypyruvate + L-alanine. It catalyses the reaction 3-hydroxypyruvate + L-asparagine = 2-oxosuccinamate + L-serine. The enzyme catalyses L-asparagine + glyoxylate = 2-oxosuccinamate + glycine. It carries out the reaction L-asparagine + pyruvate = 2-oxosuccinamate + L-alanine. With respect to regulation, inhibited by aminooxyacetate and beta-chloro-L-alanine, but not by p-hydroxymercuribenzoate. In terms of biological role, photorespiratory enzyme that catalyzes transamination reactions with multiple substrates, including asparagine. Functions exclusively as a catabolic enzyme in Asn metabolism. Involved in root development during seedling establishment after seed germination by regulating serine homeostasis and acetate conversion. This chain is Serine--glyoxylate aminotransferase, found in Arabidopsis thaliana (Mouse-ear cress).